The chain runs to 607 residues: UvrABC system protein C (607 aa).

Residues 16–94 (ARPGVYRMFD…IKQWRPPYNI (79 aa)) form the GIY-YIG domain. Residues 203-238 (QQLGNELNAEMEKAAMALNFEKAAELRDQIALLRRV) form the UVR domain.

This sequence belongs to the UvrC family. Interacts with UvrB in an incision complex.

The protein localises to the cytoplasm. Functionally, the UvrABC repair system catalyzes the recognition and processing of DNA lesions. UvrC both incises the 5' and 3' sides of the lesion. The N-terminal half is responsible for the 3' incision and the C-terminal half is responsible for the 5' incision. This Pseudomonas putida (strain W619) protein is UvrABC system protein C.